Here is a 654-residue protein sequence, read N- to C-terminus: Myrosinase-binding protein 2 (654 aa).

4 consecutive Jacalin-type lectin domains span residues 2-151 (SEKV…HFFA), 156-291 (LKHF…HFAP), 346-489 (PNKV…YFAP), and 502-645 (AKKL…HAVP). Positions 314–346 (VPAPSPAPAPSPAPAPAPAPAPAPTPAPAPAPP) are enriched in pro residues. Residues 314-355 (VPAPSPAPAPSPAPAPAPAPAPAPTPAPAPAPPNKVEALGGN) form a disordered region.

The protein belongs to the jacalin lectin family. In terms of tissue distribution, expressed in flowers. Detected mainly in ovules and styles of immature flowers, but also in pistils, styles, stamens, petals and embryos. Not detected in leaves.

The chain is Myrosinase-binding protein 2 (MBP2) from Arabidopsis thaliana (Mouse-ear cress).